Consider the following 412-residue polypeptide: Argininosuccinate synthase (412 aa).

ATP contacts are provided by residues 10–18 and alanine 36; that span reads AYSGGLDTS. L-citrulline contacts are provided by tyrosine 87 and serine 92. At tyrosine 87 the chain carries Phosphotyrosine. At lysine 112 the chain carries N6-acetyllysine. Tyrosine 113 carries the post-translational modification Phosphotyrosine. 115–123 lines the ATP pocket; sequence SHGATGKGN. 3 residues coordinate L-aspartate: threonine 119, asparagine 123, and aspartate 124. Residue asparagine 123 participates in L-citrulline binding. Arginine 127 contributes to the L-citrulline binding site. An N6-acetyllysine; by CLOCK mark is found at lysine 165 and lysine 176. A phosphoserine mark is found at serine 177 and serine 180. Positions 180 and 189 each coordinate L-citrulline. Threonine 219 bears the Phosphothreonine mark. Residues glutamate 270 and tyrosine 282 each contribute to the L-citrulline site.

The protein belongs to the argininosuccinate synthase family. Type 1 subfamily. As to quaternary structure, homotetramer. Interacts with NMRAL1. Interacts with CLOCK; in a circadian manner. Forms tissue-specific complexes with ASL, SLC7A1, HSP90AA1 and nitric oxide synthase NOS1, NOS2 or NOS3; the complex regulates cell-autonomous L-arginine synthesis and citrulline recycling while channeling extracellular L-arginine to nitric oxide synthesis pathway. Acetylated by CLOCK in a circadian manner which negatively regulates its enzyme activity. Deacetylated by histone deacetylases.

Its subcellular location is the cytoplasm. It localises to the cytosol. It carries out the reaction L-citrulline + L-aspartate + ATP = 2-(N(omega)-L-arginino)succinate + AMP + diphosphate + H(+). It functions in the pathway amino-acid biosynthesis; L-arginine biosynthesis; L-arginine from L-ornithine and carbamoyl phosphate: step 2/3. The protein operates within nitrogen metabolism; urea cycle; (N(omega)-L-arginino)succinate from L-aspartate and L-citrulline: step 1/1. Functionally, one of the enzymes of the urea cycle, the metabolic pathway transforming neurotoxic amonia produced by protein catabolism into inocuous urea in the liver of ureotelic animals. Catalyzes the formation of arginosuccinate from aspartate, citrulline and ATP and together with ASL it is responsible for the biosynthesis of arginine in most body tissues. Indirectly, may be involved in the control of blood pressure. The sequence is that of Argininosuccinate synthase from Rattus norvegicus (Rat).